Consider the following 595-residue polypeptide: uncharacterized protein (595 aa).

9 consecutive transmembrane segments (helical) span residues 64-84 (VVFL…LIVF), 86-106 (IFYA…IGVL), 239-259 (FYVI…PVAS), 281-301 (FYLW…GILP), 334-354 (VHFI…LFFI), 368-388 (MFGI…HFII), 504-524 (FIYV…SYIM), 547-567 (YLFQ…GILT), and 571-591 (IIAG…LFKF).

The protein to M.jannaschii FlaJ.

The protein resides in the cell membrane. This is an uncharacterized protein from Methanocaldococcus jannaschii (strain ATCC 43067 / DSM 2661 / JAL-1 / JCM 10045 / NBRC 100440) (Methanococcus jannaschii).